The primary structure comprises 63 residues: Large ribosomal subunit protein uL30 (63 aa).

It belongs to the universal ribosomal protein uL30 family. As to quaternary structure, part of the 50S ribosomal subunit.

The chain is Large ribosomal subunit protein uL30 from Xanthomonas axonopodis pv. citri (strain 306).